Consider the following 446-residue polypeptide: Gamma-glutamyl phosphate reductase (446 aa).

Belongs to the gamma-glutamyl phosphate reductase family.

It is found in the cytoplasm. The enzyme catalyses L-glutamate 5-semialdehyde + phosphate + NADP(+) = L-glutamyl 5-phosphate + NADPH + H(+). Its pathway is amino-acid biosynthesis; L-proline biosynthesis; L-glutamate 5-semialdehyde from L-glutamate: step 2/2. Its function is as follows. Catalyzes the NADPH-dependent reduction of L-glutamate 5-phosphate into L-glutamate 5-semialdehyde and phosphate. The product spontaneously undergoes cyclization to form 1-pyrroline-5-carboxylate. The sequence is that of Gamma-glutamyl phosphate reductase from Sulfurihydrogenibium sp. (strain YO3AOP1).